The following is a 315-amino-acid chain: Periplasmic [NiFeSe] hydrogenase small subunit (315 aa).

Residues methionine 1–alanine 32 constitute a signal peptide (tat-type signal). The [4Fe-4S] cluster site is built by cysteine 50, cysteine 53, cysteine 158, cysteine 196, histidine 240, cysteine 243, cysteine 263, cysteine 269, cysteine 278, cysteine 290, cysteine 296, and cysteine 299.

Belongs to the [NiFe]/[NiFeSe] hydrogenase small subunit family. As to quaternary structure, heterodimer of a large and a small subunit. [4Fe-4S] cluster serves as cofactor. In terms of processing, predicted to be exported by the Tat system. The position of the signal peptide cleavage has been experimentally proven.

The protein resides in the periplasm. It catalyses the reaction H2 + A = AH2. The polypeptide is Periplasmic [NiFeSe] hydrogenase small subunit (Desulfomicrobium baculatum (Desulfovibrio baculatus)).